A 145-amino-acid polypeptide reads, in one-letter code: D-aminoacyl-tRNA deacylase (145 aa).

The Gly-cisPro motif, important for rejection of L-amino acids motif lies at 137–138 (GP).

The protein belongs to the DTD family. In terms of assembly, homodimer.

It localises to the cytoplasm. It carries out the reaction glycyl-tRNA(Ala) + H2O = tRNA(Ala) + glycine + H(+). The enzyme catalyses a D-aminoacyl-tRNA + H2O = a tRNA + a D-alpha-amino acid + H(+). Functionally, an aminoacyl-tRNA editing enzyme that deacylates mischarged D-aminoacyl-tRNAs. Also deacylates mischarged glycyl-tRNA(Ala), protecting cells against glycine mischarging by AlaRS. Acts via tRNA-based rather than protein-based catalysis; rejects L-amino acids rather than detecting D-amino acids in the active site. By recycling D-aminoacyl-tRNA to D-amino acids and free tRNA molecules, this enzyme counteracts the toxicity associated with the formation of D-aminoacyl-tRNA entities in vivo and helps enforce protein L-homochirality. This Citrobacter koseri (strain ATCC BAA-895 / CDC 4225-83 / SGSC4696) protein is D-aminoacyl-tRNA deacylase.